The primary structure comprises 633 residues: Carbon catabolite-derepressing protein kinase (633 aa).

Residues 1 to 16 (MSSNNNTNTAPANANS) show a composition bias toward low complexity. A disordered region spans residues 1–46 (MSSNNNTNTAPANANSSHHHHHHHHHHHHHGHGGSNSTLNNPKSSL). A compositionally biased stretch (basic residues) spans 17-32 (SHHHHHHHHHHHHHGH). One can recognise a Protein kinase domain in the interval 55 to 306 (YQIVKTLGEG…IHEIMQDDWF (252 aa)). ATP is bound by residues 61-69 (LGEGSFGKV) and K84. D177 acts as the Proton acceptor in catalysis. T210 carries the post-translational modification Phosphothreonine; by autocatalysis. Residues 313-392 (YLLPPDLKPH…YMLIKENKSL (80 aa)) are auto-inhibitory domain (AID). The interval 317 to 345 (PDLKPHPEEENENNDSKKDGSSPDNDEID) is disordered. The segment covering 319–337 (LKPHPEEENENNDSKKDGS) has biased composition (basic and acidic residues). The UBA domain maps to 348–389 (LVNILSSTMGYEKDEIYESLESSEDTPAFNEIRDAYMLIKEN). A disordered region spans residues 409–434 (FLSQSPPTFQQQSKSHQKSQVDHETA). S413 bears the Phosphoserine mark. K461 participates in a covalent cross-link: Glycyl lysine isopeptide (Lys-Gly) (interchain with G-Cter in ubiquitin). S487 bears the Phosphoserine mark. K549 participates in a covalent cross-link: Glycyl lysine isopeptide (Lys-Gly) (interchain with G-Cter in SUMO). S632 bears the Phosphoserine mark.

The protein belongs to the protein kinase superfamily. CAMK Ser/Thr protein kinase family. SNF1 subfamily. In terms of assembly, component of the AMP-activated protein kinase complex also known as the SNF1 kinase complex (Snf1c), a heterotrimeric complex composed of an alpha subunit (SNF1), a regulatory subunit beta (GAL83 and substoichiometric alternate beta subunits SIP1 and SIP2), and a regulatory subunit gamma (SNF4). Interacts with the transcriptional activator SIP4. Interacts with SAK1. Interacts with CTK1: Interacts with adenylate cyclase CYR1. In terms of processing, phosphorylation at Thr-210 in response to glucose limitation leads to activation of kinase activity. ADP, but not AMP, protects the enzyme from dephosphorylation at Thr-210 by GLC7. Sumoylation by the SUMO (E3) ligase MMS21 leads to inhibition by interaction of SUMO attached to Lys-549 with a SUMO-interacting sequence motif located near the active site of SNF1, and by targeting SNF1 for glucose-induced destruction via the SLX5-SLX8 (SUMO-directed) ubiquitin ligase.

The protein localises to the cytoplasm. The protein resides in the nucleus. It is found in the nucleus membrane. It carries out the reaction L-seryl-[protein] + ATP = O-phospho-L-seryl-[protein] + ADP + H(+). It catalyses the reaction L-threonyl-[protein] + ATP = O-phospho-L-threonyl-[protein] + ADP + H(+). The kinase activity is positively regulated by SNF4 via sequestration of the SNF1 auto-inhibitory domain (AID). Functionally, serine/threonine protein kinase essential for release from glucose repression. Catalytic subunit of the AMP-activated protein kinase complex also known as the SNF1 kinase complex (Snf1c), a central regulator of cellular energy homeostasis, which, in response to a fall in intracellular ATP levels, activates energy-producing pathways and inhibits energy-consuming processes. The complex phosphorylates histone H3 to form H3S10ph, which promotes H3K14ac formation, leading to transcriptional activation through TBP recruitment to the promoters. The complex also negatively regulates the HOG1 MAPK pathway in ER stress response including unfolded protein response (UPR). Under nutrient/energy depletion, the complex phosphorylates and activates PAS kinase PSK1 which in turn activates PBS1, leading to the inhibition of the TORC1 signaling pathway. SNF1 also interacts and phosphorylates adenylate cyclase CYR1 and negatively regulates the protein kinase A signaling pathway. Also phosphorylates and regulates the transcriptional activator CAT8. The sequence is that of Carbon catabolite-derepressing protein kinase from Saccharomyces cerevisiae (strain ATCC 204508 / S288c) (Baker's yeast).